Consider the following 569-residue polypeptide: ABC1 family protein MCP2 (569 aa).

The N-terminal 18 residues, 1 to 18, are a transit peptide targeting the mitochondrion; the sequence is MMTKAFFNKLPFEVFRRY. Residues 19–34 lie on the Mitochondrial matrix side of the membrane; sequence VRTGKSIPQRSPRTRK. Residues 35–51 form a helical membrane-spanning segment; that stretch reads SLLVGGTIASAVVLYNF. Over 52–569 the chain is Mitochondrial intermembrane; the sequence is NDTFHDSVKH…KFIPKTWLSS (518 aa).

It belongs to the protein kinase superfamily. ADCK protein kinase family.

The protein localises to the mitochondrion. It localises to the mitochondrion inner membrane. In terms of biological role, component of MIOREX complexes, large expressome-like assemblies of ribosomes with factors involved in all the steps of post-transcriptional gene expression. Involved in mitochondrial lipid homeostasis. The chain is ABC1 family protein MCP2 from Saccharomyces cerevisiae (strain ATCC 204508 / S288c) (Baker's yeast).